The primary structure comprises 130 residues: Glycine cleavage system H protein (130 aa).

The Lipoyl-binding domain maps to 24–106 (IYSVGITEHA…YTDGWLFRIK (83 aa)). Position 65 is an N6-lipoyllysine (K65).

This sequence belongs to the GcvH family. The glycine cleavage system is composed of four proteins: P, T, L and H. The cofactor is (R)-lipoate.

Functionally, the glycine cleavage system catalyzes the degradation of glycine. The H protein shuttles the methylamine group of glycine from the P protein to the T protein. This chain is Glycine cleavage system H protein, found in Pectobacterium atrosepticum (strain SCRI 1043 / ATCC BAA-672) (Erwinia carotovora subsp. atroseptica).